We begin with the raw amino-acid sequence, 437 residues long: 3-phosphoshikimate 1-carboxyvinyltransferase (437 aa).

3-phosphoshikimate contacts are provided by Lys21, Ser22, and Arg26. Lys21 is a phosphoenolpyruvate binding site. Residues Gly101 and Arg129 each coordinate phosphoenolpyruvate. Positions 172, 173, 174, 200, 314, and 341 each coordinate 3-phosphoshikimate. Position 174 (Gln174) interacts with phosphoenolpyruvate. Asp314 functions as the Proton acceptor in the catalytic mechanism. Residues Arg345, Arg388, and Lys414 each coordinate phosphoenolpyruvate.

This sequence belongs to the EPSP synthase family. In terms of assembly, monomer.

The protein localises to the cytoplasm. It carries out the reaction 3-phosphoshikimate + phosphoenolpyruvate = 5-O-(1-carboxyvinyl)-3-phosphoshikimate + phosphate. It participates in metabolic intermediate biosynthesis; chorismate biosynthesis; chorismate from D-erythrose 4-phosphate and phosphoenolpyruvate: step 6/7. Catalyzes the transfer of the enolpyruvyl moiety of phosphoenolpyruvate (PEP) to the 5-hydroxyl of shikimate-3-phosphate (S3P) to produce enolpyruvyl shikimate-3-phosphate and inorganic phosphate. In Clostridioides difficile (strain 630) (Peptoclostridium difficile), this protein is 3-phosphoshikimate 1-carboxyvinyltransferase.